A 2028-amino-acid chain; its full sequence is Pecanex-like protein 3 (2028 aa).

The next 2 helical transmembrane spans lie at 33–53 (CFHLYVWIFLLIFPFLLYMVL) and 54–74 (PPSLMVAGVYCLVVAVIFATI). Asparagine 95 carries N-linked (GlcNAc...) asparagine glycosylation. The disordered stretch occupies residues 96–116 (STMGEQEEEAAQGESSLPRDP). At serine 127 the chain carries Phosphoserine. Residue threonine 129 is modified to Phosphothreonine. Disordered regions lie at residues 193–239 (IGDL…PMSP) and 263–625 (LVRT…SHSR). Pro residues predominate over residues 198 to 208 (QTPPGVVPDPS). Basic and acidic residues-rich tracts occupy residues 263–273 (LVRTSSRREQC) and 305–319 (TDRETLSSFKSEKTN). N-linked (GlcNAc...) asparagine glycosylation is present at asparagine 319. Threonine 370 carries the phosphothreonine modification. Residues serine 392 and serine 431 each carry the phosphoserine modification. The segment covering 427–437 (GSELSPASSLR) has biased composition (polar residues). The segment covering 444 to 459 (TDSSSSTSCYSPESSQ) has biased composition (low complexity). The segment covering 488–497 (TQRTPSTASA) has biased composition (polar residues). Phosphoserine occurs at positions 505 and 521. 7 helical membrane-spanning segments follow: residues 793-815 (NIFGVGLSSLVAFLGYLLLLKGF), 819-836 (IWVFQFCLVIASCQYSLL), 852-872 (WVIAYSRPVYFCICCLLIWLL), 880-900 (PFPPVSLYGLTLFSASFFFCA), 903-923 (VATVFTLCFPFVFLLGLLPQV), 946-968 (SPLTAVFSLTRSLLAAALLYGFC), and 980-1000 (HVPVLFSVFCGLLVAMSYHLS). Position 1025 is a phosphoserine (serine 1025). 4 helical membrane passes run 1053-1073 (LVMCVVIAVLTFAVSASTVFI), 1078-1098 (VLGFVLYALAGAVGFFTHYLL), 1244-1264 (FVLTYIAPWQITWGSAFHAFA), and 1280-1300 (LLSGLFSTPLNPLLGSAVFIM). A Phosphoserine modification is found at serine 1697. Asparagine 1770 is a glycosylation site (N-linked (GlcNAc...) asparagine). The tract at residues 1845 to 2028 (GLTSLSNHPP…AAQPLLEHQY (184 aa)) is disordered. A compositionally biased stretch (pro residues) spans 1890–1921 (RPPPLLQWPPPRLPGPPPASPAPTEGPRPSRP). Residues serine 1909 and serine 1955 each carry the phosphoserine modification. Low complexity predominate over residues 1966–1977 (PLDLSLSPDVSS). Residues 1978–1987 (EASPARTTQD) are compositionally biased toward polar residues.

Belongs to the pecanex family.

Its subcellular location is the membrane. This Mus musculus (Mouse) protein is Pecanex-like protein 3.